The sequence spans 107 residues: Nucleoid-associated protein R00231 (107 aa).

Belongs to the YbaB/EbfC family. As to quaternary structure, homodimer.

The protein resides in the cytoplasm. The protein localises to the nucleoid. Binds to DNA and alters its conformation. May be involved in regulation of gene expression, nucleoid organization and DNA protection. The sequence is that of Nucleoid-associated protein R00231 from Rhizobium meliloti (strain 1021) (Ensifer meliloti).